A 99-amino-acid polypeptide reads, in one-letter code: YcgL domain-containing protein HD_1373 (99 aa).

Residues 8-92 enclose the YcgL domain; sequence NFCAIYKSMS…PAENLLKQFL (85 aa).

This Haemophilus ducreyi (strain 35000HP / ATCC 700724) protein is YcgL domain-containing protein HD_1373.